A 177-amino-acid polypeptide reads, in one-letter code: UPF0114 protein HPP12_0190 (177 aa).

A run of 4 helical transmembrane segments spans residues 15–35 (WLLA…GYAF), 54–74 (LVLS…VLMV), 102–122 (FNAL…IFLL), and 145–165 (PIFW…LAAV).

This sequence belongs to the UPF0114 family.

The protein resides in the cell membrane. This Helicobacter pylori (strain P12) protein is UPF0114 protein HPP12_0190.